Reading from the N-terminus, the 314-residue chain is tRNA pseudouridine synthase B (314 aa).

Histidine 43 is a binding site for substrate. The active-site Nucleophile is aspartate 48. Substrate contacts are provided by tyrosine 76, tyrosine 179, and leucine 200.

This sequence belongs to the pseudouridine synthase TruB family. Type 1 subfamily.

The catalysed reaction is uridine(55) in tRNA = pseudouridine(55) in tRNA. Its function is as follows. Responsible for synthesis of pseudouridine from uracil-55 in the psi GC loop of transfer RNAs. The sequence is that of tRNA pseudouridine synthase B from Salmonella paratyphi A (strain ATCC 9150 / SARB42).